Reading from the N-terminus, the 336-residue chain is Dihydroorotate dehydrogenase (quinone) (336 aa).

Residues 62–66 (AGLDK) and Thr-86 each bind FMN. A substrate-binding site is contributed by Lys-66. Residue 111 to 115 (NRMGF) participates in substrate binding. Positions 139 and 172 each coordinate FMN. Position 172 (Asn-172) interacts with substrate. Ser-175 serves as the catalytic Nucleophile. Asn-177 contacts substrate. The FMN site is built by Lys-217 and Thr-245. Position 246–247 (246–247 (NT)) interacts with substrate. Residues Gly-268, Gly-297, and 318–319 (YS) contribute to the FMN site.

This sequence belongs to the dihydroorotate dehydrogenase family. Type 2 subfamily. In terms of assembly, monomer. FMN is required as a cofactor.

It is found in the cell membrane. It carries out the reaction (S)-dihydroorotate + a quinone = orotate + a quinol. The protein operates within pyrimidine metabolism; UMP biosynthesis via de novo pathway; orotate from (S)-dihydroorotate (quinone route): step 1/1. In terms of biological role, catalyzes the conversion of dihydroorotate to orotate with quinone as electron acceptor. The polypeptide is Dihydroorotate dehydrogenase (quinone) (Citrobacter koseri (strain ATCC BAA-895 / CDC 4225-83 / SGSC4696)).